A 622-amino-acid chain; its full sequence is Membrane protein insertase YidC (622 aa).

A helical membrane pass occupies residues 8–28; that stretch reads LFLALILSMGIWMGVNYFFFP. The span at 33-61 shows a compositional bias: basic and acidic residues; sequence KTSETKEVKVDKPSDDKQDQIQKEKKESR. A disordered region spans residues 33–70; the sequence is KTSETKEVKVDKPSDDKQDQIQKEKKESRTTIPSKGTK. 4 consecutive transmembrane segments (helical) span residues 413-433, 484-504, 532-552, and 571-591; these read FTIPNYGWSIIIFAILFKLVF, VGGCLPMVIQIPIFIALYTAF, AIPYFTQTGIGLNLLALLMVG, and MLMYVMPVMMLYIFWNMPSGV.

The protein belongs to the OXA1/ALB3/YidC family. Type 1 subfamily. In terms of assembly, interacts with the Sec translocase complex via SecD. Specifically interacts with transmembrane segments of nascent integral membrane proteins during membrane integration.

Its subcellular location is the cell inner membrane. Functionally, required for the insertion and/or proper folding and/or complex formation of integral membrane proteins into the membrane. Involved in integration of membrane proteins that insert both dependently and independently of the Sec translocase complex, as well as at least some lipoproteins. Aids folding of multispanning membrane proteins. The chain is Membrane protein insertase YidC from Leptospira borgpetersenii serovar Hardjo-bovis (strain JB197).